Here is a 147-residue protein sequence, read N- to C-terminus: Large ribosomal subunit protein bL9 (147 aa).

The protein belongs to the bacterial ribosomal protein bL9 family.

Functionally, binds to the 23S rRNA. The sequence is that of Large ribosomal subunit protein bL9 from Geotalea uraniireducens (strain Rf4) (Geobacter uraniireducens).